A 68-amino-acid polypeptide reads, in one-letter code: DNA-directed RNA polymerase subunit omega (68 aa).

It belongs to the RNA polymerase subunit omega family. In terms of assembly, the RNAP catalytic core consists of 2 alpha, 1 beta, 1 beta' and 1 omega subunit. When a sigma factor is associated with the core the holoenzyme is formed, which can initiate transcription.

The catalysed reaction is RNA(n) + a ribonucleoside 5'-triphosphate = RNA(n+1) + diphosphate. Promotes RNA polymerase assembly. Latches the N- and C-terminal regions of the beta' subunit thereby facilitating its interaction with the beta and alpha subunits. The sequence is that of DNA-directed RNA polymerase subunit omega from Trichlorobacter lovleyi (strain ATCC BAA-1151 / DSM 17278 / SZ) (Geobacter lovleyi).